Consider the following 743-residue polypeptide: Phosphoribosylformylglycinamidine synthase subunit PurL (743 aa).

His-50 is a catalytic residue. ATP contacts are provided by Tyr-53 and Lys-92. Glu-94 is a Mg(2+) binding site. Substrate contacts are provided by residues 95-98 (SHNH) and Arg-117. Catalysis depends on His-96, which acts as the Proton acceptor. Position 118 (Asp-118) interacts with Mg(2+). Residue Gln-241 participates in substrate binding. Residue Asp-269 participates in Mg(2+) binding. A substrate-binding site is contributed by 313-315 (ESQ). Residues Asp-495 and Gly-532 each coordinate ATP. Position 533 (Asn-533) interacts with Mg(2+). Substrate is bound at residue Ser-535.

It belongs to the FGAMS family. Monomer. Part of the FGAM synthase complex composed of 1 PurL, 1 PurQ and 2 PurS subunits.

Its subcellular location is the cytoplasm. The enzyme catalyses N(2)-formyl-N(1)-(5-phospho-beta-D-ribosyl)glycinamide + L-glutamine + ATP + H2O = 2-formamido-N(1)-(5-O-phospho-beta-D-ribosyl)acetamidine + L-glutamate + ADP + phosphate + H(+). It functions in the pathway purine metabolism; IMP biosynthesis via de novo pathway; 5-amino-1-(5-phospho-D-ribosyl)imidazole from N(2)-formyl-N(1)-(5-phospho-D-ribosyl)glycinamide: step 1/2. Functionally, part of the phosphoribosylformylglycinamidine synthase complex involved in the purines biosynthetic pathway. Catalyzes the ATP-dependent conversion of formylglycinamide ribonucleotide (FGAR) and glutamine to yield formylglycinamidine ribonucleotide (FGAM) and glutamate. The FGAM synthase complex is composed of three subunits. PurQ produces an ammonia molecule by converting glutamine to glutamate. PurL transfers the ammonia molecule to FGAR to form FGAM in an ATP-dependent manner. PurS interacts with PurQ and PurL and is thought to assist in the transfer of the ammonia molecule from PurQ to PurL. The protein is Phosphoribosylformylglycinamidine synthase subunit PurL of Rhizobium etli (strain ATCC 51251 / DSM 11541 / JCM 21823 / NBRC 15573 / CFN 42).